The primary structure comprises 1368 residues: DNA-directed RNA polymerase subunit beta (1368 aa).

Belongs to the RNA polymerase beta chain family. In terms of assembly, the RNAP catalytic core consists of 2 alpha, 1 beta, 1 beta' and 1 omega subunit. When a sigma factor is associated with the core the holoenzyme is formed, which can initiate transcription.

The enzyme catalyses RNA(n) + a ribonucleoside 5'-triphosphate = RNA(n+1) + diphosphate. Functionally, DNA-dependent RNA polymerase catalyzes the transcription of DNA into RNA using the four ribonucleoside triphosphates as substrates. The chain is DNA-directed RNA polymerase subunit beta from Janthinobacterium sp. (strain Marseille) (Minibacterium massiliensis).